The sequence spans 131 residues: Transcription antitermination protein NusB (131 aa).

Belongs to the NusB family.

Functionally, involved in transcription antitermination. Required for transcription of ribosomal RNA (rRNA) genes. Binds specifically to the boxA antiterminator sequence of the ribosomal RNA (rrn) operons. This Campylobacter fetus subsp. fetus (strain 82-40) protein is Transcription antitermination protein NusB.